A 455-amino-acid chain; its full sequence is Mitochondrial distribution and morphology protein 10 (455 aa).

Disordered regions lie at residues 216–249 (WETT…EDAV), 278–311 (IRFS…PSPA), and 377–399 (PRSS…PLGE). Over residues 217–227 (ETTNGENGTNT) the composition is skewed to low complexity. Residues 228–237 (SAPGNASNSR) are compositionally biased toward polar residues. A compositionally biased stretch (pro residues) spans 291–301 (AQIPPPSPFTP).

Belongs to the MDM10 family. As to quaternary structure, component of the ER-mitochondria encounter structure (ERMES) or MDM complex, composed of MMM1, MDM10, MDM12 and MDM34. Associates with the mitochondrial outer membrane sorting assembly machinery SAM(core) complex.

The protein resides in the mitochondrion outer membrane. Functionally, component of the ERMES/MDM complex, which serves as a molecular tether to connect the endoplasmic reticulum and mitochondria. Components of this complex are involved in the control of mitochondrial shape and protein biogenesis and may function in phospholipid exchange. MDM10 is involved in the late assembly steps of the general translocase of the mitochondrial outer membrane (TOM complex). Functions in the TOM40-specific route of the assembly of outer membrane beta-barrel proteins, including the association of TOM40 with the receptor TOM22 and small TOM proteins. Can associate with the SAM(core) complex as well as the MDM12-MMM1 complex, both involved in late steps of the major beta-barrel assembly pathway, that is responsible for biogenesis of all outer membrane beta-barrel proteins. May act as a switch that shuttles between both complexes and channels precursor proteins into the TOM40-specific pathway. Plays a role in mitochondrial morphology and in the inheritance of mitochondria. The sequence is that of Mitochondrial distribution and morphology protein 10 from Coprinopsis cinerea (strain Okayama-7 / 130 / ATCC MYA-4618 / FGSC 9003) (Inky cap fungus).